Consider the following 718-residue polypeptide: Polyphosphate kinase (718 aa).

An ATP-binding site is contributed by N47. Positions 372 and 402 each coordinate Mg(2+). The active-site Phosphohistidine intermediate is H432. Positions 465, 561, and 589 each coordinate ATP. The segment at 683 to 718 is disordered; it reads KADHGDTTPTSNAHQFIPMMSPKNEPDASDLDREDD. The span at 709–718 shows a compositional bias: acidic residues; sequence DASDLDREDD.

This sequence belongs to the polyphosphate kinase 1 (PPK1) family. The cofactor is Mg(2+). An intermediate of this reaction is the autophosphorylated ppk in which a phosphate is covalently linked to a histidine residue through a N-P bond.

It carries out the reaction [phosphate](n) + ATP = [phosphate](n+1) + ADP. In terms of biological role, catalyzes the reversible transfer of the terminal phosphate of ATP to form a long-chain polyphosphate (polyP). In Lactiplantibacillus plantarum (strain ATCC BAA-793 / NCIMB 8826 / WCFS1) (Lactobacillus plantarum), this protein is Polyphosphate kinase.